The chain runs to 321 residues: Thioredoxin reductase (321 aa).

36 to 43 (TGMEKGGQ) is an FAD binding site. A disulfide bridge connects residues Cys-136 and Cys-139. Residue 287 to 296 (DVMDHIYRQA) coordinates FAD.

The protein belongs to the class-II pyridine nucleotide-disulfide oxidoreductase family. Homodimer. The cofactor is FAD.

It is found in the cytoplasm. The catalysed reaction is [thioredoxin]-dithiol + NADP(+) = [thioredoxin]-disulfide + NADPH + H(+). The chain is Thioredoxin reductase (trxB) from Escherichia coli O157:H7.